Consider the following 301-residue polypeptide: Phosducin-like protein (301 aa).

Thr2 bears the N-acetylthreonine mark. Residues 15-60 (YYYSTSEDEDSDHEDKDRGRGAPASSSTPAEAELAGEGISVNTGPK) are disordered. Phosphoserine occurs at positions 20 and 25. The segment covering 36–49 (APASSSTPAEAELA) has biased composition (low complexity). The region spanning 36-299 (APASSSTPAE…TCHSEDSDLE (264 aa)) is the Phosducin domain. Positions 158-301 (FKQVLEIPSG…HSEDSDLEID (144 aa)) are thioredoxin fold. A phosphoserine mark is found at Ser226, Ser293, and Ser296.

This sequence belongs to the phosducin family. Interacts with the CCT chaperonin complex. Forms a complex with the beta and gamma subunits of the GTP-binding protein, transducin.

The protein resides in the cell projection. It localises to the cilium. Its function is as follows. Functions as a co-chaperone for CCT in the assembly of heterotrimeric G protein complexes, facilitates the assembly of both Gbeta-Ggamma and RGS-Gbeta5 heterodimers. Also acts as a positive regulator of hedgehog signaling and regulates ciliary function. This is Phosducin-like protein (Pdcl) from Rattus norvegicus (Rat).